Reading from the N-terminus, the 175-residue chain is Receptor activity-modifying protein 2 (175 aa).

Positions Met1–Ala42 are cleaved as a signal peptide. The Extracellular segment spans residues Gln43–Glu143. 2 disulfides stabilise this stretch: Cys68–Cys99 and Cys84–Cys131. Asn130 carries an N-linked (GlcNAc...) asparagine glycan. The chain crosses the membrane as a helical span at residues Asp144 to Val165. Over Trp166–Ala175 the chain is Cytoplasmic.

It belongs to the RAMP family. In terms of assembly, heterodimer of CALCRL and RAMP2; the interaction forms the receptor complex for adrenomedullin/ADM. Heterodimer of CALCR and RAMP2; interaction forms the AMYR2 receptor complex for calcitonin/CALC and amylin/IAPP. As to expression, strongly expressed in lung, breast, immune system and fetal tissues.

It localises to the cell membrane. In terms of biological role, accessory protein that interacts with and modulates the function of G-protein coupled receptors including calcitonin gene-related peptide type 1 receptor (CALCRL) and calcitonin receptor (CALCR). Required for the transport of CALCRL to the plasma membrane. Together with CALCRL, form a receptor complex for adrenomedullin/ADM. Together with CALCR, act as a receptor complex for calcitonin/CT/CALC. Together with CALCR, also act as a receptor complex for amylin/IAPP. The protein is Receptor activity-modifying protein 2 of Homo sapiens (Human).